Consider the following 103-residue polypeptide: Large ribosomal subunit protein bL21 (103 aa).

This sequence belongs to the bacterial ribosomal protein bL21 family. Part of the 50S ribosomal subunit. Contacts protein L20.

In terms of biological role, this protein binds to 23S rRNA in the presence of protein L20. This is Large ribosomal subunit protein bL21 from Burkholderia mallei (strain NCTC 10247).